Reading from the N-terminus, the 193-residue chain is Acyl carrier protein phosphodiesterase (193 aa).

The protein belongs to the AcpH family.

It carries out the reaction holo-[ACP] + H2O = apo-[ACP] + (R)-4'-phosphopantetheine + H(+). Functionally, converts holo-ACP to apo-ACP by hydrolytic cleavage of the phosphopantetheine prosthetic group from ACP. This chain is Acyl carrier protein phosphodiesterase, found in Escherichia coli O139:H28 (strain E24377A / ETEC).